Consider the following 218-residue polypeptide: Large ribosomal subunit protein uL3 (218 aa).

Belongs to the universal ribosomal protein uL3 family. As to quaternary structure, part of the 50S ribosomal subunit. Forms a cluster with proteins L14 and L19.

One of the primary rRNA binding proteins, it binds directly near the 3'-end of the 23S rRNA, where it nucleates assembly of the 50S subunit. This is Large ribosomal subunit protein uL3 from Corynebacterium diphtheriae (strain ATCC 700971 / NCTC 13129 / Biotype gravis).